The chain runs to 483 residues: WAS/WASL-interacting protein family member 3 (483 aa).

Positions 1 to 29 (MPVPPPPPPPLPPPPPPLGAPPPPPPSAP) are enriched in pro residues. The disordered stretch occupies residues 1-414 (MPVPPPPPPP…GGQLRNGSLH (414 aa)). 3 consecutive short sequence motifs (profilin-binding motif) follow at residues 3-8 (VPPPPP), 11-16 (LPPPPP), and 20-25 (APPPPP). The WH2 domain maps to 45–62 (GRSALLADIQQGTRLRKV). Residue arginine 46 is modified to Asymmetric dimethylarginine. The RLRK motif lies at 58 to 61 (RLRK). Polar residues-rich tracts occupy residues 63–78 (TQINDRSAPQIESSKG) and 87–96 (ANTRGASTPP). Serine 149 is modified (phosphoserine). Residues 166 to 192 (PPRPNVPAPPPPTPPPPPPPLPPPLPS) show a composition bias toward pro residues. Position 202 is a phosphoserine (serine 202). Pro residues-rich tracts occupy residues 215–239 (VAPPVPCAPPPPPPPPPPTPPPLPP) and 256–271 (HLPPIPPPLPLLPPCG). Residues 277 to 288 (AEPASPAQDAQE) show a composition bias toward low complexity. The span at 289–298 (PPAPPPPLPP) shows a compositional bias: pro residues. 2 stretches are compositionally biased toward low complexity: residues 299 to 308 (YASCSPRASL) and 331 to 345 (PSFQAPPQKAGAQAL). At serine 383 the chain carries Phosphoserine. Low complexity predominate over residues 393 to 404 (QQATAWTPTQQP). The WASP-binding motif signature appears at 424-448 (TFHSVEDFPPPDEYKPCQKIYPSKI). The interval 461-483 (EAVGQSSDDIKGRNSQLSLKTLR) is disordered. A compositionally biased stretch (polar residues) spans 473 to 483 (RNSQLSLKTLR).

It belongs to the verprolin family. Interacts with WASL, and monomeric and filamentous actin.

It localises to the cytoplasm. In terms of biological role, may be a regulator of cytoskeletal organization. May have a role in spermatogenesis. The sequence is that of WAS/WASL-interacting protein family member 3 (WIPF3) from Homo sapiens (Human).